The primary structure comprises 165 residues: MAGFGEPGIDTVDAAGLTVGVVAARWHGELTDHMLERAVAAADACGARSVVARVAGSVELPVVAQALARRYDVVVALGVVVRGATAHFDYVCRSVTDGLTRVALDEGKPVGHGVLTVNTIEQARDRAGLPGSAEDKGWATTVAVLDAALAVRGLARTTQRVGFDA.

5-amino-6-(D-ribitylamino)uracil contacts are provided by residues W26, 57–59 (SVE), and 79–81 (VVV). 84–85 (AT) serves as a coordination point for (2S)-2-hydroxy-3-oxobutyl phosphate. H87 acts as the Proton donor in catalysis. Residue H112 participates in 5-amino-6-(D-ribitylamino)uracil binding. R126 serves as a coordination point for (2S)-2-hydroxy-3-oxobutyl phosphate.

The protein belongs to the DMRL synthase family.

It catalyses the reaction (2S)-2-hydroxy-3-oxobutyl phosphate + 5-amino-6-(D-ribitylamino)uracil = 6,7-dimethyl-8-(1-D-ribityl)lumazine + phosphate + 2 H2O + H(+). The protein operates within cofactor biosynthesis; riboflavin biosynthesis; riboflavin from 2-hydroxy-3-oxobutyl phosphate and 5-amino-6-(D-ribitylamino)uracil: step 1/2. Functionally, catalyzes the formation of 6,7-dimethyl-8-ribityllumazine by condensation of 5-amino-6-(D-ribitylamino)uracil with 3,4-dihydroxy-2-butanone 4-phosphate. This is the penultimate step in the biosynthesis of riboflavin. In Salinispora arenicola (strain CNS-205), this protein is 6,7-dimethyl-8-ribityllumazine synthase.